Reading from the N-terminus, the 119-residue chain is Virulence protein VsdF (119 aa).

In terms of biological role, expressed but non-essential protein, involved in the virulence of Salmonellas. This chain is Virulence protein VsdF (vsdF), found in Salmonella dublin.